The primary structure comprises 184 residues: Ribosome-recycling factor (184 aa).

The protein belongs to the RRF family.

The protein localises to the cytoplasm. Functionally, responsible for the release of ribosomes from messenger RNA at the termination of protein biosynthesis. May increase the efficiency of translation by recycling ribosomes from one round of translation to another. In Stenotrophomonas maltophilia (strain K279a), this protein is Ribosome-recycling factor.